The chain runs to 191 residues: UPF0312 protein Shewana3_1179 (191 aa).

An N-terminal signal peptide occupies residues 1-22 (MKKQLLAALIGGSLLAPMAASA).

Belongs to the UPF0312 family. Type 1 subfamily.

The protein localises to the periplasm. This Shewanella sp. (strain ANA-3) protein is UPF0312 protein Shewana3_1179.